A 114-amino-acid chain; its full sequence is Large ribosomal subunit protein bL19 (114 aa).

It belongs to the bacterial ribosomal protein bL19 family.

Its function is as follows. This protein is located at the 30S-50S ribosomal subunit interface and may play a role in the structure and function of the aminoacyl-tRNA binding site. This chain is Large ribosomal subunit protein bL19, found in Halalkalibacterium halodurans (strain ATCC BAA-125 / DSM 18197 / FERM 7344 / JCM 9153 / C-125) (Bacillus halodurans).